The chain runs to 96 residues: Co-chaperonin GroES 1 (96 aa).

It belongs to the GroES chaperonin family. In terms of assembly, heptamer of 7 subunits arranged in a ring. Interacts with the chaperonin GroEL.

The protein resides in the cytoplasm. Functionally, together with the chaperonin GroEL, plays an essential role in assisting protein folding. The GroEL-GroES system forms a nano-cage that allows encapsulation of the non-native substrate proteins and provides a physical environment optimized to promote and accelerate protein folding. GroES binds to the apical surface of the GroEL ring, thereby capping the opening of the GroEL channel. The chain is Co-chaperonin GroES 1 from Vibrio vulnificus (strain CMCP6).